A 277-amino-acid polypeptide reads, in one-letter code: Lectin 1 (277 aa).

The signal sequence occupies residues Met1–Ser30. An N-linked (GlcNAc...) asparagine glycan is attached at Asn143. Positions 152 and 154 each coordinate Mn(2+). The Ca(2+) site is built by Asp154, Asn158, and Asp161. Mn(2+) is bound by residues Asp161 and His167. Asn269 is a glycosylation site (N-linked (GlcNAc...) asparagine).

The protein belongs to the leguminous lectin family.

Lectin that may be involved in a cell recognition process. This is Lectin 1 (LEC1) from Medicago truncatula (Barrel medic).